Consider the following 424-residue polypeptide: Cytoplasmic tRNA 2-thiolation protein 2 (424 aa).

The interval 357–385 is disordered; it reads PAAPETEEEEELSKKAHMEKSQEKTGDAD. The segment covering 368–385 has biased composition (basic and acidic residues); the sequence is LSKKAHMEKSQEKTGDAD.

It belongs to the CTU2/NCS2 family.

The protein resides in the cytoplasm. It participates in tRNA modification; 5-methoxycarbonylmethyl-2-thiouridine-tRNA biosynthesis. Functionally, plays a central role in 2-thiolation of mcm(5)S(2)U at tRNA wobble positions of tRNA(Lys), tRNA(Glu) and tRNA(Gln). May act by forming a heterodimer with NCS6 that ligates sulfur from thiocarboxylated URM1 onto the uridine of tRNAs at wobble position. Prior mcm(5) tRNA modification by the elongator complex is required for 2-thiolation. May also be involved in protein urmylation. The chain is Cytoplasmic tRNA 2-thiolation protein 2 from Yarrowia lipolytica (strain CLIB 122 / E 150) (Yeast).